The chain runs to 846 residues: Translation initiation factor IF-2 (846 aa).

The segment at 94–263 (QRSPEEIQAE…HGFQNPTGPV (170 aa)) is disordered. A compositionally biased stretch (basic and acidic residues) spans 96 to 135 (SPEEIQAEQKRELDERRAAENAARDKVEAEVRQRNEEQAR). Composition is skewed to low complexity over residues 136–148 (RQAA…APAP) and 158–176 (AAPV…ASED). 2 stretches are compositionally biased toward basic and acidic residues: residues 177 to 206 (AAAR…RGEA) and 230 to 239 (TTDEESDGAR). The segment covering 240 to 253 (RGRGGKSKLKKRNQ) has biased composition (basic residues). In terms of domain architecture, tr-type G spans 346 to 513 (SRAPVVTVMG…AVLLQAEILE (168 aa)). Residues 355–362 (GHVDHGKT) form a G1 region. Residue 355 to 362 (GHVDHGKT) coordinates GTP. Positions 380-384 (GITQH) are G2. Positions 401 to 404 (DTPG) are G3. GTP contacts are provided by residues 401–405 (DTPGH) and 455–458 (NKID). The interval 455-458 (NKID) is G4. Positions 491–493 (SAK) are G5.

Belongs to the TRAFAC class translation factor GTPase superfamily. Classic translation factor GTPase family. IF-2 subfamily.

The protein resides in the cytoplasm. Its function is as follows. One of the essential components for the initiation of protein synthesis. Protects formylmethionyl-tRNA from spontaneous hydrolysis and promotes its binding to the 30S ribosomal subunits. Also involved in the hydrolysis of GTP during the formation of the 70S ribosomal complex. The sequence is that of Translation initiation factor IF-2 from Pseudomonas putida (strain ATCC 47054 / DSM 6125 / CFBP 8728 / NCIMB 11950 / KT2440).